A 98-amino-acid chain; its full sequence is Small ribosomal subunit protein eS24 (98 aa).

Residues G76–A98 form a disordered region. Residues G89–A98 show a composition bias toward basic and acidic residues.

It belongs to the eukaryotic ribosomal protein eS24 family.

The polypeptide is Small ribosomal subunit protein eS24 (Methanosphaerula palustris (strain ATCC BAA-1556 / DSM 19958 / E1-9c)).